Here is a 444-residue protein sequence, read N- to C-terminus: Methylenetetrahydrofolate--tRNA-(uracil-5-)-methyltransferase TrmFO (444 aa).

10–15 is an FAD binding site; that stretch reads GAGLAG.

Belongs to the MnmG family. TrmFO subfamily. It depends on FAD as a cofactor.

The protein resides in the cytoplasm. The catalysed reaction is uridine(54) in tRNA + (6R)-5,10-methylene-5,6,7,8-tetrahydrofolate + NADH + H(+) = 5-methyluridine(54) in tRNA + (6S)-5,6,7,8-tetrahydrofolate + NAD(+). It catalyses the reaction uridine(54) in tRNA + (6R)-5,10-methylene-5,6,7,8-tetrahydrofolate + NADPH + H(+) = 5-methyluridine(54) in tRNA + (6S)-5,6,7,8-tetrahydrofolate + NADP(+). Its function is as follows. Catalyzes the folate-dependent formation of 5-methyl-uridine at position 54 (M-5-U54) in all tRNAs. The protein is Methylenetetrahydrofolate--tRNA-(uracil-5-)-methyltransferase TrmFO of Streptococcus pneumoniae serotype 2 (strain D39 / NCTC 7466).